A 150-amino-acid chain; its full sequence is MNESIDINQIFTLLPHRYPFILVDRVIDYKVMEYLIAIKNVTINENFFTGHFPGNPIMPGVLMLEALAQACGILANLSRQPKEGYEFLHYFAGIDNARFKQVVIPGDQLRLEVRLAGQKRDFWRMHGEAYIGDKLACSADLLSAAKEIKK.

His51 is an active-site residue.

The protein belongs to the thioester dehydratase family. FabZ subfamily.

Its subcellular location is the cytoplasm. The catalysed reaction is a (3R)-hydroxyacyl-[ACP] = a (2E)-enoyl-[ACP] + H2O. Involved in unsaturated fatty acids biosynthesis. Catalyzes the dehydration of short chain beta-hydroxyacyl-ACPs and long chain saturated and unsaturated beta-hydroxyacyl-ACPs. In Legionella pneumophila (strain Paris), this protein is 3-hydroxyacyl-[acyl-carrier-protein] dehydratase FabZ.